The chain runs to 184 residues: UPF0215 protein MJ1150 (184 aa).

The protein belongs to the UPF0215 family.

The polypeptide is UPF0215 protein MJ1150 (Methanocaldococcus jannaschii (strain ATCC 43067 / DSM 2661 / JAL-1 / JCM 10045 / NBRC 100440) (Methanococcus jannaschii)).